The chain runs to 275 residues: Adaptin ear-binding coat-associated protein 1 (275 aa).

The tract at residues 170–191 (KGGASKPRTARGGGLSLLPPPP) is disordered. At Arg-180 the chain carries Omega-N-methylarginine. At Thr-211 the chain carries Phosphothreonine. 2 short sequence motifs (WXXF motif) span residues 252–255 (WGDF) and 272–275 (WVQF). A disordered region spans residues 254-275 (DFSTASSSVPNQAPQPSNWVQF). The span at 256–275 (STASSSVPNQAPQPSNWVQF) shows a compositional bias: polar residues.

This sequence belongs to the NECAP family. As to quaternary structure, interacts with AP1G1 and AP2A1 components of the adapter protein complexes AP-1 and AP-2. Interacts with the GAE domain proteins GGA1, GGA2 and GGA3.

The protein localises to the cytoplasmic vesicle. It localises to the clathrin-coated vesicle membrane. The protein resides in the cell membrane. Involved in endocytosis. The polypeptide is Adaptin ear-binding coat-associated protein 1 (NECAP1) (Homo sapiens (Human)).